A 172-amino-acid polypeptide reads, in one-letter code: Biogenesis of lysosome-related organelles complex 1 subunit 6 (172 aa).

Residues 1-10 (MNVPVPPPPD) are compositionally biased toward pro residues. Disordered stretches follow at residues 1 to 35 (MNVP…RSPD) and 136 to 172 (ALKL…AKRT). Residues 143 to 164 (RQKEELEREQQREREFEREKQL) show a composition bias toward basic and acidic residues.

The protein belongs to the BLOC1S6 family. In terms of assembly, homodimer. Octamer composed of one copy each BLOC1S1, BLOC1S2, BLOC1S3, BLOC1S4, BLOC1S5, BLOC1S6, DTNBP1/BLOC1S7 and SNAPIN/BLOC1S8. The BLOC-1 complex associates with the AP-3 protein complex and membrane protein cargos. Interacts with BLOC1S4, BLOC1S5, DTNBP1/BLOC1S7, F-actin, SNAP25 isoform 1 and isoform 2, SNAP47 and STX12. Component of the biogenesis of lysosome-related organelles complex 1 (BLOC-1) composed of BLOC1S1, BLOC1S2, BLOC1S3, BLOC1S4, BLOC1S5, BLOC1S6, DTNBP1/BLOC1S7 and SNAPIN/BLOC1S8.

The protein resides in the cytoplasm. The protein localises to the membrane. Component of the BLOC-1 complex, a complex that is required for normal biogenesis of lysosome-related organelles (LRO), such as platelet dense granules and melanosomes. In concert with the AP-3 complex, the BLOC-1 complex is required to target membrane protein cargos into vesicles assembled at cell bodies for delivery into neurites and nerve terminals. The BLOC-1 complex, in association with SNARE proteins, is also proposed to be involved in neurite extension. May play a role in intracellular vesicle trafficking, particularly in the vesicle-docking and fusion process. This chain is Biogenesis of lysosome-related organelles complex 1 subunit 6 (Bloc1s6), found in Rattus norvegicus (Rat).